A 313-amino-acid chain; its full sequence is Homoserine kinase (313 aa).

Residue 92–102 participates in ATP binding; that stretch reads PPGRGLGSSGA.

Belongs to the GHMP kinase family. Homoserine kinase subfamily.

It is found in the cytoplasm. The catalysed reaction is L-homoserine + ATP = O-phospho-L-homoserine + ADP + H(+). The protein operates within amino-acid biosynthesis; L-threonine biosynthesis; L-threonine from L-aspartate: step 4/5. Functionally, catalyzes the ATP-dependent phosphorylation of L-homoserine to L-homoserine phosphate. This Aeropyrum pernix (strain ATCC 700893 / DSM 11879 / JCM 9820 / NBRC 100138 / K1) protein is Homoserine kinase.